Consider the following 299-residue polypeptide: Tyrosine recombinase XerD (299 aa).

A Core-binding (CB) domain is found at 3-88 (QQDNPLIEQF…AMRRLFQYLY (86 aa)). Residues 109–293 (RLPKDLSEAQ…ATERLRQLHQ (185 aa)) enclose the Tyr recombinase domain. Catalysis depends on residues Arg-149, Lys-173, His-245, Arg-248, and His-271. The active-site O-(3'-phospho-DNA)-tyrosine intermediate is Tyr-280.

This sequence belongs to the 'phage' integrase family. XerD subfamily. In terms of assembly, forms a cyclic heterotetrameric complex composed of two molecules of XerC and two molecules of XerD, in which XerC interacts with XerD via its C-terminal region, XerD interacts with XerC via its C-terminal region and so on.

The protein localises to the cytoplasm. Its activity is regulated as follows. FtsK may regulate the catalytic switch between XerC and XerD in the heterotetrameric complex during the two steps of the recombination process. In terms of biological role, site-specific tyrosine recombinase, which acts by catalyzing the cutting and rejoining of the recombining DNA molecules. Binds cooperatively to specific DNA consensus sequences that are separated from XerC binding sites by a short central region, forming the heterotetrameric XerC-XerD complex that recombines DNA substrates. The complex is essential to convert dimers of the bacterial chromosome into monomers to permit their segregation at cell division. It also contributes to the segregational stability of plasmids. In the complex XerD specifically exchanges the bottom DNA strands. This is Tyrosine recombinase XerD from Yersinia pestis.